We begin with the raw amino-acid sequence, 201 residues long: Recombination protein RecR (201 aa).

Residues 57–72 form a C4-type zinc finger; it reads CADCRTFTEQPVCTIC. A Toprim domain is found at 81–176; sequence GQICVVESPA…MASRIAHGVP (96 aa).

This sequence belongs to the RecR family.

Functionally, may play a role in DNA repair. It seems to be involved in an RecBC-independent recombinational process of DNA repair. It may act with RecF and RecO. The protein is Recombination protein RecR of Sodalis glossinidius (strain morsitans).